A 497-amino-acid chain; its full sequence is tRNA-2-methylthio-N(6)-dimethylallyladenosine synthase (497 aa).

Over residues Met-1–Gln-10 the composition is skewed to basic and acidic residues. Residues Met-1 to Arg-26 are disordered. Residues Arg-26–Ile-142 form the MTTase N-terminal domain. Cys-35, Cys-71, Cys-105, Cys-179, Cys-183, and Cys-186 together coordinate [4Fe-4S] cluster. Residues Arg-165 to Glu-395 enclose the Radical SAM core domain. Positions Gln-398–Leu-464 constitute a TRAM domain.

Belongs to the methylthiotransferase family. MiaB subfamily. In terms of assembly, monomer. [4Fe-4S] cluster serves as cofactor.

It is found in the cytoplasm. The catalysed reaction is N(6)-dimethylallyladenosine(37) in tRNA + (sulfur carrier)-SH + AH2 + 2 S-adenosyl-L-methionine = 2-methylsulfanyl-N(6)-dimethylallyladenosine(37) in tRNA + (sulfur carrier)-H + 5'-deoxyadenosine + L-methionine + A + S-adenosyl-L-homocysteine + 2 H(+). Functionally, catalyzes the methylthiolation of N6-(dimethylallyl)adenosine (i(6)A), leading to the formation of 2-methylthio-N6-(dimethylallyl)adenosine (ms(2)i(6)A) at position 37 in tRNAs that read codons beginning with uridine. In Acidothermus cellulolyticus (strain ATCC 43068 / DSM 8971 / 11B), this protein is tRNA-2-methylthio-N(6)-dimethylallyladenosine synthase.